Consider the following 109-residue polypeptide: MFGKGGLGNLMKQAQQMQERMQKMQEEIAQLEVTGEAGAGLIKVTINGAHNCRRIDIDPSLMEDDKEMLEDLIAAAFNDAVRRAEEMQKEKMASVTAGMSLPPGFKMPF.

Belongs to the YbaB/EbfC family. Homodimer.

Its subcellular location is the cytoplasm. It is found in the nucleoid. Functionally, binds to DNA and alters its conformation. May be involved in regulation of gene expression, nucleoid organization and DNA protection. The sequence is that of Nucleoid-associated protein HS_1309 from Histophilus somni (strain 129Pt) (Haemophilus somnus).